The primary structure comprises 709 residues: Leucine-rich repeat and calponin homology domain-containing protein 1 (709 aa).

Basic residues predominate over residues 24–37 (LHQHHQHHQHHQHH). Residues 24–49 (LHQHHQHHQHHQHHGGTGGTGFNLPL) form a disordered region. LRR repeat units lie at residues 60–83 (AANSGGLNLSARKLKEFPRTTAPG), 86–108 (LSDTVRADLSKNRLVEVPMELCQ), 109–131 (FVSLEILNLYHNCIRVIPEAIVN), 132–155 (LQMLTHLNLSRNQLSALPACLCGL), 157–176 (LKVLIASNNKLGSLPEEIGQ), 177–199 (LKQLMELDVSCNEITALPQQIGQ), 200–223 (LKSLRELNVRRNYLKVLPPELVDL), 225–244 (LVKFDFSCNKVLVIPVCFRE), and 245–268 (MKQLQVLLLENNPLQSPPAQICTK). Composition is skewed to basic and acidic residues over residues 301-312 (HQHVEDSKKDSD) and 381-390 (QEREQLAGRA). Residues 301–390 (HQHVEDSKKD…QEREQLAGRA (90 aa)) are disordered. 3 positions are modified to phosphoserine: Ser-395, Ser-518, and Ser-522. The interval 504–526 (SNGSQYSPNEIRENSPSVSPTAN) is disordered. Phosphothreonine is present on Thr-581. A Calponin-homology (CH) domain is found at 589–702 (MREEKELVEQ…TTVQALLDVT (114 aa)).

In terms of assembly, interacts (via LRR repeats) with unphosphorylated DOCK8 (via DHR-2 domain); the interaction prevents the association between DOCK8 and CDC42.

It localises to the cytoplasm. Its function is as follows. Acts as a negative regulator of GTPase CDC42 by sequestering CDC42-guanine exchange factor DOCK8. Probably by preventing CDC42 activation, negatively regulates CD4(+) T-cell migration in response to chemokine stimulation. This chain is Leucine-rich repeat and calponin homology domain-containing protein 1 (Lrch1), found in Mus musculus (Mouse).